Here is a 100-residue protein sequence, read N- to C-terminus: Small ribosomal subunit protein uS14 (100 aa).

Belongs to the universal ribosomal protein uS14 family. Part of the 30S ribosomal subunit. Contacts proteins S3 and S10.

Its function is as follows. Binds 16S rRNA, required for the assembly of 30S particles and may also be responsible for determining the conformation of the 16S rRNA at the A site. The sequence is that of Small ribosomal subunit protein uS14 from Synechococcus sp. (strain CC9605).